The sequence spans 428 residues: Enolase (428 aa).

Q163 contacts (2R)-2-phosphoglycerate. E205 serves as the catalytic Proton donor. Positions 242, 285, and 312 each coordinate Mg(2+). 4 residues coordinate (2R)-2-phosphoglycerate: K337, R366, S367, and K388. The active-site Proton acceptor is the K337.

The protein belongs to the enolase family. The cofactor is Mg(2+).

The protein localises to the cytoplasm. Its subcellular location is the secreted. It is found in the cell surface. It carries out the reaction (2R)-2-phosphoglycerate = phosphoenolpyruvate + H2O. The protein operates within carbohydrate degradation; glycolysis; pyruvate from D-glyceraldehyde 3-phosphate: step 4/5. In terms of biological role, catalyzes the reversible conversion of 2-phosphoglycerate (2-PG) into phosphoenolpyruvate (PEP). It is essential for the degradation of carbohydrates via glycolysis. The polypeptide is Enolase (Finegoldia magna (strain ATCC 29328 / DSM 20472 / WAL 2508) (Peptostreptococcus magnus)).